The chain runs to 304 residues: Phospholipase A1 (304 aa).

A disulfide bridge links Cys-6 with Cys-90. Asn-61 carries N-linked (GlcNAc...) asparagine glycosylation. Ser-140 acts as the Nucleophile in catalysis. Asp-168 acts as the Charge relay system in catalysis. Cystine bridges form between Cys-179/Cys-184 and Cys-222/Cys-231. Catalysis depends on His-233, which acts as the Charge relay system. 3 disulfide bridges follow: Cys-248–Cys-272, Cys-249–Cys-297, and Cys-265–Cys-270.

The protein belongs to the AB hydrolase superfamily. Lipase family. As to expression, expressed by the venom gland.

The protein localises to the secreted. It carries out the reaction a 1,2-diacyl-sn-glycero-3-phosphocholine + H2O = a 2-acyl-sn-glycero-3-phosphocholine + a fatty acid + H(+). Catalyzes the hydrolysis of phosphatidylcholine with phospholipase A1 activity. May act as an allergen and induce hemolytic activity. This Vespa velutina (Asian yellow-legged hornet) protein is Phospholipase A1.